The primary structure comprises 342 residues: uncharacterized protein (342 aa).

This sequence belongs to the bacterial luciferase oxidoreductase family.

This is an uncharacterized protein from Sinorhizobium fredii (strain NBRC 101917 / NGR234).